The following is a 202-amino-acid chain: MRPEGVSRGRASSVSISMCPPPPNGARRASLGCAPPLNSRPVCCAPSSVSLSSSSSRRSMPSLGSSRSSSLPSTGSLRSITRDPERLPSRPPSYTAINPECLLERGAERPRAWTASVMTAPPSYSEALCQAPPAYELVPELSYHPTQDPRGVYSSRSDPHQTSRRRQNPICIFIIVVATMLLILGLLLTITLSSLTNGKKEK.

Disordered stretches follow at residues 1-32 (MRPE…ASLG) and 46-95 (PSSV…PSYT). The span at 47 to 79 (SSVSLSSSSSRRSMPSLGSSRSSSLPSTGSLRS) shows a compositional bias: low complexity.

This is an uncharacterized protein from Equus caballus (Horse).